A 1204-amino-acid chain; its full sequence is Cingulin (1204 aa).

The segment at 7–357 is head; it reads MAEPRGPVDH…GVISSGSSKA (351 aa). Positions 25-48 are disordered; the sequence is EPVSGAEMGTLRRGGRRPAKDARA. Residues 48–62 carry the ZIM motif; the sequence is ASTYGVAVRVQGIAG. The interaction with TJP1/ZO1 stretch occupies residues 54–67; sequence AVRVQGIAGQPFVV. Disordered regions lie at residues 68–174 and 186–266; these read LNSG…DTAP and DGQL…FSRA. Over residues 93-119 the composition is skewed to polar residues; it reads ALSSDSELPENPYSQVQGFPAPSQSST. 10 positions are modified to phosphoserine: Ser95, Ser96, Ser98, Ser135, Ser137, Ser140, Ser155, Ser165, Ser214, and Ser217. Positions 207–231 are enriched in basic and acidic residues; the sequence is EQRKRSKSLDSRLPRDTLEERERQS. Over residues 232 to 245 the composition is skewed to polar residues; it reads TNHWNPSTKYNNHV. The segment covering 247–261 has biased composition (low complexity); that stretch reads SLKQPAQSPSPSPLS. Ser258, Ser276, Ser338, and Ser351 each carry phosphoserine. The stretch at 358–1161 forms a coiled coil; that stretch reads MAGQGELARK…SLEKDSWRKA (804 aa). The interval 379 to 398 is disordered; the sequence is VKKRQKLEPSRAGLERQLEE. N6-acetyllysine is present on Lys579. The segment at 1161 to 1182 is disordered; it reads ASRSAAESALKHEGLSSDEEFD. The segment at 1162 to 1204 is tail; it reads SRSAAESALKHEGLSSDEEFDSVYDPSSIASLLTESNLQTSSC. Phosphoserine is present on residues Ser1176, Ser1177, and Ser1183.

This sequence belongs to the cingulin family. As to quaternary structure, homodimer. Interacts with TJP1/ZO1 and SPEF1.

It localises to the cell junction. The protein resides in the tight junction. Its function is as follows. Probably plays a role in the formation and regulation of the tight junction (TJ) paracellular permeability barrier. The protein is Cingulin of Plecturocebus moloch (Dusky titi monkey).